Here is a 454-residue protein sequence, read N- to C-terminus: UDP-N-acetylmuramate--L-alanine ligase (454 aa).

Residue 113–119 (GSHGKTT) coordinates ATP.

The protein belongs to the MurCDEF family.

The protein resides in the cytoplasm. It carries out the reaction UDP-N-acetyl-alpha-D-muramate + L-alanine + ATP = UDP-N-acetyl-alpha-D-muramoyl-L-alanine + ADP + phosphate + H(+). Its pathway is cell wall biogenesis; peptidoglycan biosynthesis. Cell wall formation. This chain is UDP-N-acetylmuramate--L-alanine ligase, found in Sulfurihydrogenibium sp. (strain YO3AOP1).